Consider the following 159-residue polypeptide: Putative ribosomal RNA large subunit methyltransferase H (159 aa).

S-adenosyl-L-methionine-binding positions include L76, G108, and L127 to F132.

It belongs to the RNA methyltransferase RlmH family.

It localises to the cytoplasm. It carries out the reaction pseudouridine(1915) in 23S rRNA + S-adenosyl-L-methionine = N(3)-methylpseudouridine(1915) in 23S rRNA + S-adenosyl-L-homocysteine + H(+). In terms of biological role, specifically methylates the pseudouridine at position 1915 (m3Psi1915) in 23S rRNA. The chain is Putative ribosomal RNA large subunit methyltransferase H from Methanospirillum hungatei JF-1 (strain ATCC 27890 / DSM 864 / NBRC 100397 / JF-1).